We begin with the raw amino-acid sequence, 304 residues long: Ribonuclease Z (304 aa).

Zn(2+)-binding residues include His63, His65, Asp67, His68, His141, Asp208, and His266. Catalysis depends on Asp67, which acts as the Proton acceptor.

Belongs to the RNase Z family. Homodimer. Zn(2+) is required as a cofactor.

It catalyses the reaction Endonucleolytic cleavage of RNA, removing extra 3' nucleotides from tRNA precursor, generating 3' termini of tRNAs. A 3'-hydroxy group is left at the tRNA terminus and a 5'-phosphoryl group is left at the trailer molecule.. Its function is as follows. Zinc phosphodiesterase, which displays some tRNA 3'-processing endonuclease activity. Probably involved in tRNA maturation, by removing a 3'-trailer from precursor tRNA. The chain is Ribonuclease Z from Chlamydia trachomatis serovar D (strain ATCC VR-885 / DSM 19411 / UW-3/Cx).